Here is a 334-residue protein sequence, read N- to C-terminus: Glycerol-3-phosphate dehydrogenase [NAD(P)+] (334 aa).

Residues serine 14, tyrosine 15, arginine 35, and lysine 109 each contribute to the NADPH site. Residues lysine 109, glycine 138, and threonine 140 each contribute to the sn-glycerol 3-phosphate site. NADPH is bound at residue alanine 142. Sn-glycerol 3-phosphate-binding residues include lysine 194, aspartate 247, serine 257, arginine 258, and asparagine 259. Lysine 194 functions as the Proton acceptor in the catalytic mechanism. Arginine 258 lines the NADPH pocket. Residues valine 282 and glutamate 284 each contribute to the NADPH site.

The protein belongs to the NAD-dependent glycerol-3-phosphate dehydrogenase family.

The protein resides in the cytoplasm. It catalyses the reaction sn-glycerol 3-phosphate + NAD(+) = dihydroxyacetone phosphate + NADH + H(+). It carries out the reaction sn-glycerol 3-phosphate + NADP(+) = dihydroxyacetone phosphate + NADPH + H(+). It functions in the pathway membrane lipid metabolism; glycerophospholipid metabolism. Functionally, catalyzes the reduction of the glycolytic intermediate dihydroxyacetone phosphate (DHAP) to sn-glycerol 3-phosphate (G3P), the key precursor for phospholipid synthesis. This Colwellia psychrerythraea (strain 34H / ATCC BAA-681) (Vibrio psychroerythus) protein is Glycerol-3-phosphate dehydrogenase [NAD(P)+].